A 274-amino-acid polypeptide reads, in one-letter code: Large ribosomal subunit protein uL2 (274 aa).

The tract at residues 223–274 (GIAMNPVDHPHGGGEGRSKGNHPVTPWGMPTKGYKTRKKKQSDKYIISRRKK) is disordered. A compositionally biased stretch (basic and acidic residues) spans 230-240 (DHPHGGGEGRS). Basic residues predominate over residues 256 to 274 (YKTRKKKQSDKYIISRRKK).

Belongs to the universal ribosomal protein uL2 family. Part of the 50S ribosomal subunit. Forms a bridge to the 30S subunit in the 70S ribosome.

Its function is as follows. One of the primary rRNA binding proteins. Required for association of the 30S and 50S subunits to form the 70S ribosome, for tRNA binding and peptide bond formation. It has been suggested to have peptidyltransferase activity; this is somewhat controversial. Makes several contacts with the 16S rRNA in the 70S ribosome. The sequence is that of Large ribosomal subunit protein uL2 from Nautilia profundicola (strain ATCC BAA-1463 / DSM 18972 / AmH).